A 58-amino-acid polypeptide reads, in one-letter code: Small ribosomal subunit protein bS21 (58 aa).

The disordered stretch occupies residues 31–58 (DLKRIRHHETPVEKYKRKAQQRRRSRRR). The segment covering 45 to 58 (YKRKAQQRRRSRRR) has biased composition (basic residues).

This sequence belongs to the bacterial ribosomal protein bS21 family.

The polypeptide is Small ribosomal subunit protein bS21 (Prochlorococcus marinus (strain MIT 9303)).